The primary structure comprises 270 residues: Tryptophan synthase alpha chain (270 aa).

Residues glutamate 49 and aspartate 60 each act as proton acceptor in the active site.

It belongs to the TrpA family. In terms of assembly, tetramer of two alpha and two beta chains.

The enzyme catalyses (1S,2R)-1-C-(indol-3-yl)glycerol 3-phosphate + L-serine = D-glyceraldehyde 3-phosphate + L-tryptophan + H2O. Its pathway is amino-acid biosynthesis; L-tryptophan biosynthesis; L-tryptophan from chorismate: step 5/5. Its function is as follows. The alpha subunit is responsible for the aldol cleavage of indoleglycerol phosphate to indole and glyceraldehyde 3-phosphate. In Pseudomonas fluorescens (strain Pf0-1), this protein is Tryptophan synthase alpha chain.